We begin with the raw amino-acid sequence, 113 residues long: Large ribosomal subunit protein bL17 (113 aa).

This sequence belongs to the bacterial ribosomal protein bL17 family. As to quaternary structure, part of the 50S ribosomal subunit. Contacts protein L32.

This is Large ribosomal subunit protein bL17 from Clostridium novyi (strain NT).